The following is a 194-amino-acid chain: Peptidyl-tRNA hydrolase (194 aa).

TRNA is bound at residue tyrosine 17. The active-site Proton acceptor is histidine 22. TRNA-binding residues include tyrosine 69, asparagine 71, and asparagine 117.

Belongs to the PTH family. In terms of assembly, monomer.

The protein localises to the cytoplasm. It carries out the reaction an N-acyl-L-alpha-aminoacyl-tRNA + H2O = an N-acyl-L-amino acid + a tRNA + H(+). Hydrolyzes ribosome-free peptidyl-tRNAs (with 1 or more amino acids incorporated), which drop off the ribosome during protein synthesis, or as a result of ribosome stalling. In terms of biological role, catalyzes the release of premature peptidyl moieties from peptidyl-tRNA molecules trapped in stalled 50S ribosomal subunits, and thus maintains levels of free tRNAs and 50S ribosomes. This Arthrobacter sp. (strain FB24) protein is Peptidyl-tRNA hydrolase.